Reading from the N-terminus, the 200-residue chain is Holliday junction resolvase RecU (200 aa).

The tract at residues 1–27 (MALKYPSGKEYRGNKPNAARRPAADYA) is disordered. 4 residues coordinate Mg(2+): Thr-84, Asp-86, Glu-99, and Gln-118.

It belongs to the RecU family. As to quaternary structure, homodimer. Mg(2+) serves as cofactor.

The protein localises to the cytoplasm. It carries out the reaction Endonucleolytic cleavage at a junction such as a reciprocal single-stranded crossover between two homologous DNA duplexes (Holliday junction).. Functionally, endonuclease that resolves Holliday junction intermediates in genetic recombination. Cleaves mobile four-strand junctions by introducing symmetrical nicks in paired strands. Promotes annealing of linear ssDNA with homologous dsDNA. Required for DNA repair, homologous recombination and chromosome segregation. The protein is Holliday junction resolvase RecU of Geobacillus kaustophilus (strain HTA426).